Here is a 356-residue protein sequence, read N- to C-terminus: MNFPQAIIDASALRHNLQRVRELAPRSQIMAVVKADGYGHGLTRVADVLVAADAFAVARLEEATALRQAGHRCPVVLLGGISDKEQLQLAAAHRLTLVVHEFAQLDLLERVRITSPLPVWVKADTGMHRLGFPPQVVAKAIARLRCCPAVASVVGLMSHLASADESEDFLTPIQLQTFEGIAAPGLLRSMANSAAVMVYPYAHFDWVRPGLMLYGASPFAHGTGAAVGLKSVMTLQTRLIAIHHLRPGDSIGYGATWVCPEAMTVGVAALGYGDGYPRHAVSGTPVLVNGRPVPLVGRVSMDMITLDLRTQPKAKVGDPVIAWGPNLPVEEVARHATTIPYELLCQVTGRVPRTME.

K34 functions as the Proton acceptor; specific for D-alanine in the catalytic mechanism. K34 is subject to N6-(pyridoxal phosphate)lysine. R129 contributes to the substrate binding site. Catalysis depends on Y253, which acts as the Proton acceptor; specific for L-alanine. M301 contacts substrate.

It belongs to the alanine racemase family. Requires pyridoxal 5'-phosphate as cofactor.

It catalyses the reaction L-alanine = D-alanine. Its pathway is amino-acid biosynthesis; D-alanine biosynthesis; D-alanine from L-alanine: step 1/1. Functionally, catalyzes the interconversion of L-alanine and D-alanine. May also act on other amino acids. This is Alanine racemase (alr) from Nitrosococcus oceani (strain ATCC 19707 / BCRC 17464 / JCM 30415 / NCIMB 11848 / C-107).